A 298-amino-acid chain; its full sequence is Mimecan (298 aa).

The first 20 residues, 1–20 (MKTLQSTLLLLLFVPLIKPA), serve as a signal peptide directing secretion. Asn88 carries an N-linked (GlcNAc...) (keratan sulfate) asparagine glycan. LRR repeat units follow at residues 112 to 131 (DAVP…FNKI), 132 to 155 (KKLT…GNLI), 156 to 179 (EDIE…ENQL), 180 to 199 (LKLP…YNKI), 200 to 225 (KSRG…HNAL), 226 to 246 (ESVP…FNNI), and 247 to 277 (ASIT…GNPI). The N-linked (GlcNAc...) (keratan sulfate) asparagine glycan is linked to Asn214. An intrachain disulfide couples Cys255 to Cys288. A glycan (N-linked (GlcNAc...) (keratan sulfate) asparagine) is linked at Asn258.

It belongs to the small leucine-rich proteoglycan (SLRP) family. SLRP class III subfamily. Post-translationally, contains keratan sulfate.

The protein localises to the secreted. It is found in the extracellular space. The protein resides in the extracellular matrix. Its function is as follows. Induces bone formation in conjunction with TGF-beta-1 or TGF-beta-2. This chain is Mimecan (OGN), found in Pongo abelii (Sumatran orangutan).